We begin with the raw amino-acid sequence, 897 residues long: Interleukin enhancer-binding factor 3 (897 aa).

A DZF domain is found at 5-378 (RIFVNDDRHV…PMKRPMEEDG (374 aa)). A disordered region spans residues 52–85 (QEKGNSELSEAENMDTPPDDESKEGAGEQKAEHM). The span at 60–73 (SEAENMDTPPDDES) shows a compositional bias: acidic residues. A Phosphothreonine modification is found at Thr67. The span at 74 to 85 (KEGAGEQKAEHM) shows a compositional bias: basic and acidic residues. Lys100 is subject to N6-acetyllysine. Thr188 bears the Phosphothreonine; by PKR mark. Ser190 carries the post-translational modification Phosphoserine. Lys297 participates in a covalent cross-link: Glycyl lysine isopeptide (Lys-Gly) (interchain with G-Cter in ubiquitin). The residue at position 315 (Thr315) is a Phosphothreonine; by PKR. Lys348 participates in a covalent cross-link: Glycyl lysine isopeptide (Lys-Gly) (interchain with G-Cter in SUMO1). A disordered region spans residues 363-401 (TTYAITPMKRPMEEDGEEKSPSKKKKKIQKKEEKAEPPQ). The Bipartite nuclear localization signal signature appears at 371 to 389 (KRPMEEDGEEKSPSKKKKK). A compositionally biased stretch (basic and acidic residues) spans 372–383 (RPMEEDGEEKSP). Phosphoserine is present on residues Ser382 and Ser384. Residue Lys396 forms a Glycyl lysine isopeptide (Lys-Gly) (interchain with G-Cter in SUMO2) linkage. The 70-residue stretch at 398–467 (EPPQAMNALM…AVKVLQDMGL (70 aa)) folds into the DRBM 1 domain. An N6-acetyllysine modification is found at Lys460. Disordered regions lie at residues 466-524 (GLPT…LTKH), 624-662 (GMGG…GTNH), and 720-897 (GDSY…YQYR). The span at 472–481 (EGRDSSKGED) shows a compositional bias: basic and acidic residues. 4 positions are modified to phosphoserine: Ser476, Ser477, Ser482, and Ser486. Lys489 is covalently cross-linked (Glycyl lysine isopeptide (Lys-Gly) (interchain with G-Cter in SUMO2)). Positions 499-508 (VEAVSNPSSV) are enriched in low complexity. The DRBM 2 domain maps to 524-590 (HGKNPVMELN…ALAALEKLFP (67 aa)). Residues 609-897 (RGGPKFAAKP…TEHSMNYQYR (289 aa)) are interaction with PRMT1. Residues 644-662 (RGGNIRGRGRGRGFGGTNH) show a composition bias toward gly residues. 3 stretches are compositionally biased toward low complexity: residues 745–769 (SYSS…SSYG), 783–794 (GSYSSYSNSYNS), and 802–812 (DYSYDSKFNYS). 4 positions are modified to phosphoserine: Ser794, Ser812, Ser814, and Ser818. Gly residues predominate over residues 813–822 (GSGGRSGGNS). The segment covering 823-833 (YGSSGSSYNTG) has biased composition (low complexity). A compositionally biased stretch (gly residues) spans 834-844 (SHGGYGAGSGG). A compositionally biased stretch (low complexity) spans 845–885 (SSSYQGKQGGYSSQSNYSSPGSSQSYSGPASSYQSSQGGYS).

Identified in a IGF2BP1-dependent mRNP granule complex containing untranslated mRNAs. Interacts with FUS and SMN. Interacts (via C-terminus) with PRMT1. Forms a complex with ILF2. Can also bind to PRKDC/XRCC7: this may stabilize the interaction of PRKDC/XRCC7 and the heterodimeric complex of XRCC6/KU70 and XRCC5/KU80. Forms a heteromeric complex with ZNF346 and ILF3. Found in a nuclear export complex with XPO5, ILF3, Ran and double-stranded RNA or double-stranded minihelix VA1 RNA. Found in a nuclear export complex with XPO5, RAN, ILF3, ZNF346 and double-stranded RNA. Interacts with XPO5 and ZNF346. Forms a complex with ILF2, YLPM1, KHDRBS1, RBMX, NCOA5 and PPP1CA. Interacts with AGO1 and AGO2. Interacts with DHX36; this interaction occurs in a RNA-dependent manner. Interacts with ELAVL1; this interaction occurs in a RNA-dependent manner. Interacts with HAVCR2; this interaction promotes ILF3 ubiquitination and subsequent degradation. Post-translationally, phosphorylated at Thr-188 and Thr-315 by PKR in response to RNA viruses. This phosphorylation results in the dissociation of ILF2 from the ILF2-ILF3 complex resulting in a cytoplasmic sequestration of ILF3 where it can bind to viral RNAs and impede viral replication. In terms of processing, methylated by protein arginine N-methyltransferase 1.

The protein localises to the nucleus. Its subcellular location is the nucleolus. The protein resides in the cytoplasm. Functionally, RNA-binding protein that plays an essential role in the biogenesis of circular RNAs (circRNAs) which are produced by back-splicing circularization of pre-mRNAs. Within the nucleus, promotes circRNAs processing by stabilizing the regulatory elements residing in the flanking introns of the circularized exons. Plays thereby a role in the back-splicing of a subset of circRNAs. As a consequence, participates in a wide range of transcriptional and post-transcriptional processes. Binds to poly-U elements and AU-rich elements (AREs) in the 3'-UTR of target mRNAs. Upon viral infection, ILF3 accumulates in the cytoplasm and participates in the innate antiviral response. Mechanistically, ILF3 becomes phosphorylated and activated by the double-stranded RNA-activated protein kinase/PKR which releases ILF3 from cellular mature circRNAs. In turn, unbound ILF3 molecules are able to interact with and thus inhibit viral mRNAs. This is Interleukin enhancer-binding factor 3 (Ilf3) from Rattus norvegicus (Rat).